The following is a 670-amino-acid chain: Transcription factor Ken 2 (670 aa).

The BTB domain occupies 108-176 (TDLLLICDGK…LYSGQVYVRS (69 aa)). Disordered stretches follow at residues 200–288 (SDGS…DRDR) and 307–470 (NNHP…SDDA). Residues 218–230 (NRNTEGITGSSVV) show a composition bias toward polar residues. Residues 325–338 (HHLHHHHHHHHRQL) are compositionally biased toward basic residues. 2 stretches are compositionally biased toward gly residues: residues 351-368 (GGGS…GESG) and 389-400 (SGGGGAGSGRRS). Over residues 407-419 (EPAEDDEDYELDV) the composition is skewed to acidic residues. The segment covering 451 to 464 (SDPVNLSIVKQQQD) has biased composition (polar residues). Residues 586–594 (NLKTHLRVH) form a C2H2-type 1; degenerate zinc finger. C2H2-type zinc fingers lie at residues 600–623 (FACR…CSVH) and 636–658 (YTCC…LSGH).

It localises to the nucleus. Its function is as follows. Transcription factor required for terminalia development. Negative regulator of the JAK/STAT pathway: represses JAK/STAT-dependent expression of ventral veins lacking (vvl) in the posterior spiracles. This Culex quinquefasciatus (Southern house mosquito) protein is Transcription factor Ken 2.